The chain runs to 447 residues: N-succinylarginine dihydrolase (447 aa).

Substrate is bound by residues 19–28 (AGLSFGNEAS), N110, and 137–138 (HR). E174 is a catalytic residue. R214 contributes to the substrate binding site. Residue H250 is part of the active site. Residues D252 and N365 each contribute to the substrate site. The Nucleophile role is filled by C371.

The protein belongs to the succinylarginine dihydrolase family. As to quaternary structure, homodimer.

The enzyme catalyses N(2)-succinyl-L-arginine + 2 H2O + 2 H(+) = N(2)-succinyl-L-ornithine + 2 NH4(+) + CO2. It functions in the pathway amino-acid degradation; L-arginine degradation via AST pathway; L-glutamate and succinate from L-arginine: step 2/5. In terms of biological role, catalyzes the hydrolysis of N(2)-succinylarginine into N(2)-succinylornithine, ammonia and CO(2). This Acinetobacter baumannii (strain SDF) protein is N-succinylarginine dihydrolase.